Reading from the N-terminus, the 291-residue chain is N-acetylmannosamine kinase (291 aa).

ATP is bound by residues 5–12 and 132–139; these read AIDIGGTK and GVGGGVVS. The Zn(2+) site is built by His-156, Cys-166, Cys-168, and Cys-173.

It belongs to the ROK (NagC/XylR) family. NanK subfamily. As to quaternary structure, homodimer.

The enzyme catalyses an N-acyl-D-mannosamine + ATP = an N-acyl-D-mannosamine 6-phosphate + ADP + H(+). The protein operates within amino-sugar metabolism; N-acetylneuraminate degradation; D-fructose 6-phosphate from N-acetylneuraminate: step 2/5. Catalyzes the phosphorylation of N-acetylmannosamine (ManNAc) to ManNAc-6-P. The chain is N-acetylmannosamine kinase from Escherichia coli O157:H7.